The sequence spans 402 residues: Phosphoglycerate kinase (402 aa).

Substrate is bound by residues 24–26 (DFN), arginine 40, 63–66 (HFGR), arginine 122, and arginine 155. ATP contacts are provided by residues lysine 206, glycine 297, glutamate 328, and 358-361 (GGDS).

The protein belongs to the phosphoglycerate kinase family. As to quaternary structure, monomer.

It is found in the cytoplasm. It catalyses the reaction (2R)-3-phosphoglycerate + ATP = (2R)-3-phospho-glyceroyl phosphate + ADP. Its pathway is carbohydrate degradation; glycolysis; pyruvate from D-glyceraldehyde 3-phosphate: step 2/5. This is Phosphoglycerate kinase from Prochlorococcus marinus (strain AS9601).